The chain runs to 153 residues: UPF0756 membrane protein BCQ_4399 (153 aa).

A run of 4 helical transmembrane segments spans residues 8–28, 54–74, 87–107, and 117–137; these read FLFI…TVAI, LGVT…EIGF, WIAL…VQLL, and LVFG…GPLI.

It belongs to the UPF0756 family.

It is found in the cell membrane. The sequence is that of UPF0756 membrane protein BCQ_4399 from Bacillus cereus (strain Q1).